Reading from the N-terminus, the 238-residue chain is Dolichyldiphosphatase 1 (238 aa).

4 helical membrane-spanning segments follow: residues L33–F53, P100–L120, F130–V150, and W162–I182.

This sequence belongs to the dolichyldiphosphatase family. As to expression, widely expressed with highest levels in brain, kidney, lung and intestine.

The protein localises to the endoplasmic reticulum membrane. The catalysed reaction is a di-trans,poly-cis-dolichyl diphosphate + H2O = a di-trans,poly-cis-dolichyl phosphate + phosphate + H(+). It participates in protein modification; protein glycosylation. In terms of biological role, required for efficient N-glycosylation. Necessary for maintaining optimal levels of dolichol-linked oligosaccharides. Hydrolyzes dolichyl pyrophosphate at a very high rate and dolichyl monophosphate at a much lower rate. Does not act on phosphatidate. This Mus musculus (Mouse) protein is Dolichyldiphosphatase 1 (Dolpp1).